A 307-amino-acid chain; its full sequence is Ribosomal RNA small subunit methyltransferase H (307 aa).

Residues 38-40 (GGH), Asp58, Phe82, Asp99, and Gln106 contribute to the S-adenosyl-L-methionine site.

It belongs to the methyltransferase superfamily. RsmH family.

The protein resides in the cytoplasm. The catalysed reaction is cytidine(1402) in 16S rRNA + S-adenosyl-L-methionine = N(4)-methylcytidine(1402) in 16S rRNA + S-adenosyl-L-homocysteine + H(+). Functionally, specifically methylates the N4 position of cytidine in position 1402 (C1402) of 16S rRNA. This is Ribosomal RNA small subunit methyltransferase H from Variovorax paradoxus (strain S110).